A 205-amino-acid polypeptide reads, in one-letter code: ATP-dependent Clp protease proteolytic subunit (205 aa).

Catalysis depends on S109, which acts as the Nucleophile. H134 is an active-site residue.

The protein belongs to the peptidase S14 family. As to quaternary structure, fourteen ClpP subunits assemble into 2 heptameric rings which stack back to back to give a disk-like structure with a central cavity, resembling the structure of eukaryotic proteasomes.

It localises to the cytoplasm. The enzyme catalyses Hydrolysis of proteins to small peptides in the presence of ATP and magnesium. alpha-casein is the usual test substrate. In the absence of ATP, only oligopeptides shorter than five residues are hydrolyzed (such as succinyl-Leu-Tyr-|-NHMec, and Leu-Tyr-Leu-|-Tyr-Trp, in which cleavage of the -Tyr-|-Leu- and -Tyr-|-Trp bonds also occurs).. Its function is as follows. Cleaves peptides in various proteins in a process that requires ATP hydrolysis. Has a chymotrypsin-like activity. Plays a major role in the degradation of misfolded proteins. The sequence is that of ATP-dependent Clp protease proteolytic subunit from Buchnera aphidicola subsp. Baizongia pistaciae (strain Bp).